Reading from the N-terminus, the 310-residue chain is Aspartate carbamoyltransferase catalytic subunit 2 (310 aa).

Carbamoyl phosphate-binding residues include Arg55 and Thr56. Lys85 provides a ligand contact to L-aspartate. Carbamoyl phosphate is bound by residues Arg106, His134, and Gln137. Arg167 and Arg228 together coordinate L-aspartate. 2 residues coordinate carbamoyl phosphate: Leu266 and Pro267.

The protein belongs to the aspartate/ornithine carbamoyltransferase superfamily. ATCase family. Heterododecamer (2C3:3R2) of six catalytic PyrB chains organized as two trimers (C3), and six regulatory PyrI chains organized as three dimers (R2).

The enzyme catalyses carbamoyl phosphate + L-aspartate = N-carbamoyl-L-aspartate + phosphate + H(+). It functions in the pathway pyrimidine metabolism; UMP biosynthesis via de novo pathway; (S)-dihydroorotate from bicarbonate: step 2/3. Catalyzes the condensation of carbamoyl phosphate and aspartate to form carbamoyl aspartate and inorganic phosphate, the committed step in the de novo pyrimidine nucleotide biosynthesis pathway. This Shewanella halifaxensis (strain HAW-EB4) protein is Aspartate carbamoyltransferase catalytic subunit 2.